The sequence spans 230 residues: Ureidoacrylate amidohydrolase RutB (230 aa).

Asp-24 acts as the Proton acceptor in catalysis. The active site involves Lys-133. The Nucleophile role is filled by Cys-166.

The protein belongs to the isochorismatase family. RutB subfamily.

It carries out the reaction (Z)-3-ureidoacrylate + H2O + H(+) = (Z)-3-aminoacrylate + NH4(+) + CO2. The enzyme catalyses (Z)-3-ureidoacrylate + H2O = (Z)-3-aminoacrylate + carbamate + H(+). The catalysed reaction is (Z)-2-methylureidoacrylate + H2O + H(+) = (Z)-2-methylaminoacrylate + NH4(+) + CO2. Its function is as follows. Hydrolyzes ureidoacrylate to form aminoacrylate and carbamate. The carbamate hydrolyzes spontaneously, thereby releasing one of the nitrogen atoms of the pyrimidine ring as ammonia and one of its carbon atoms as CO2. This is Ureidoacrylate amidohydrolase RutB from Escherichia coli O44:H18 (strain 042 / EAEC).